The following is a 283-amino-acid chain: Ubiquinone biosynthesis protein COQ4, mitochondrial (283 aa).

Residues 1-25 (MAIAKSVRARAVGLRSLRVLCAQRS) constitute a mitochondrion transit peptide. The Zn(2+) site is built by histidine 166, aspartate 167, histidine 170, and glutamate 182.

Belongs to the COQ4 family. Component of a multi-subunit COQ enzyme complex, composed of at least COQ3, COQ4, COQ5, COQ6, COQ7 and COQ9. Zn(2+) is required as a cofactor.

It is found in the mitochondrion inner membrane. It catalyses the reaction a 4-hydroxy-3-methoxy-5-(all-trans-polyprenyl)benzoate + H(+) = a 2-methoxy-6-(all-trans-polyprenyl)phenol + CO2. It participates in cofactor biosynthesis; ubiquinone biosynthesis. In terms of biological role, lyase that catalyzes the C1-decarboxylation of 4-hydroxy-3-methoxy-5-(all-trans-polyprenyl)benzoic acid into 2-methoxy-6-(all-trans-polyprenyl)phenol during ubiquinone biosynthesis. In Coccidioides immitis (strain RS) (Valley fever fungus), this protein is Ubiquinone biosynthesis protein COQ4, mitochondrial.